Reading from the N-terminus, the 481-residue chain is Cysteine--tRNA ligase (481 aa).

C29 contributes to the Zn(2+) binding site. Residues 31–41 (PTVYDYSHLGH) carry the 'HIGH' region motif. Zn(2+)-binding residues include C210, H235, and E239. The 'KMSKS' region signature appears at 272 to 276 (KMSKS). K275 is an ATP binding site.

It belongs to the class-I aminoacyl-tRNA synthetase family. Monomer. It depends on Zn(2+) as a cofactor.

Its subcellular location is the cytoplasm. It catalyses the reaction tRNA(Cys) + L-cysteine + ATP = L-cysteinyl-tRNA(Cys) + AMP + diphosphate. The protein is Cysteine--tRNA ligase of Anaeromyxobacter dehalogenans (strain 2CP-C).